Here is a 181-residue protein sequence, read N- to C-terminus: Trafficking protein particle complex subunit 3-like protein (181 aa).

Cys68 is lipidated: S-palmitoyl cysteine.

Belongs to the TRAPP small subunits family. BET3 subfamily. Homodimer. Component of the multisubunit TRAPP (transport protein particle) complex, which includes at least TRAPPC2, TRAPPC2L, TRAPPC3, TRAPPC3L, TRAPPC4, TRAPPC5, TRAPPC8, TRAPPC9, TRAPPC10, TRAPPC11 and TRAPPC12.

Its subcellular location is the golgi apparatus. It is found in the cis-Golgi network. It localises to the endoplasmic reticulum. In terms of biological role, may play a role in vesicular transport from endoplasmic reticulum to Golgi. This is Trafficking protein particle complex subunit 3-like protein (Trappc3l) from Mus musculus (Mouse).